The following is a 164-amino-acid chain: Putative glutamine amidotransferase-like protein RP713 (164 aa).

Residues 39 to 164 (TIANPNSLFM…VITVKIIIYM (126 aa)) form the Glutamine amidotransferase type-1 domain.

This is Putative glutamine amidotransferase-like protein RP713 from Rickettsia prowazekii (strain Madrid E).